A 393-amino-acid chain; its full sequence is NAD(P)H-quinone oxidoreductase subunit H, chloroplastic (393 aa).

It belongs to the complex I 49 kDa subunit family. In terms of assembly, NDH is composed of at least 16 different subunits, 5 of which are encoded in the nucleus.

It localises to the plastid. Its subcellular location is the chloroplast thylakoid membrane. The enzyme catalyses a plastoquinone + NADH + (n+1) H(+)(in) = a plastoquinol + NAD(+) + n H(+)(out). The catalysed reaction is a plastoquinone + NADPH + (n+1) H(+)(in) = a plastoquinol + NADP(+) + n H(+)(out). NDH shuttles electrons from NAD(P)H:plastoquinone, via FMN and iron-sulfur (Fe-S) centers, to quinones in the photosynthetic chain and possibly in a chloroplast respiratory chain. The immediate electron acceptor for the enzyme in this species is believed to be plastoquinone. Couples the redox reaction to proton translocation, and thus conserves the redox energy in a proton gradient. In Angiopteris evecta (Mule's foot fern), this protein is NAD(P)H-quinone oxidoreductase subunit H, chloroplastic.